The chain runs to 516 residues: Coiled-coil domain-containing protein 82 (516 aa).

Residues 1 to 13 (MVHARRHETRKNS) show a composition bias toward basic residues. The disordered stretch occupies residues 1 to 265 (MVHARRHETR…DYGDAENEDD (265 aa)). Over residues 38–62 (DSDEELDSDEEIGSDEDLDGGESID) the composition is skewed to acidic residues. Residues 78–96 (IPEKETELNLIKVESERSN) are compositionally biased toward basic and acidic residues. Residues 98-107 (KCHMNTSSSS) are compositionally biased toward polar residues. Over residues 113–135 (MNKTKHNDLPDDEAHPGQAEGHH) the composition is skewed to basic and acidic residues. 2 positions are modified to phosphoserine: Ser170 and Ser194. Thr202 is modified (phosphothreonine). The stretch at 204 to 232 (EKSPAARKREYHQKLQELCERSRQKQRHN) forms a coiled coil. Positions 215-226 (HQKLQELCERSR) are enriched in basic and acidic residues. Acidic residues predominate over residues 248–265 (TDEDEDDDDYGDAENEDD). Ser301 bears the Phosphoserine mark.

This chain is Coiled-coil domain-containing protein 82 (Ccdc82), found in Rattus norvegicus (Rat).